Reading from the N-terminus, the 136-residue chain is Large ribosomal subunit protein uL16 (136 aa).

The protein belongs to the universal ribosomal protein uL16 family. As to quaternary structure, part of the 50S ribosomal subunit.

Functionally, binds 23S rRNA and is also seen to make contacts with the A and possibly P site tRNAs. This Rickettsia massiliae (strain Mtu5) protein is Large ribosomal subunit protein uL16.